A 370-amino-acid polypeptide reads, in one-letter code: Maturase K (370 aa).

Belongs to the intron maturase 2 family. MatK subfamily.

Its subcellular location is the plastid. It is found in the chloroplast. Its function is as follows. Usually encoded in the trnK tRNA gene intron. Probably assists in splicing its own and other chloroplast group II introns. This chain is Maturase K, found in Marchantia polymorpha (Common liverwort).